The chain runs to 312 residues: tRNA dimethylallyltransferase (312 aa).

14–21 is a binding site for ATP; that stretch reads GPTASGKS. 16 to 21 is a substrate binding site; that stretch reads TASGKS. Interaction with substrate tRNA stretches follow at residues 39–42 and 163–167; these read DSSL and QRLQR.

This sequence belongs to the IPP transferase family. Monomer. Mg(2+) serves as cofactor.

The catalysed reaction is adenosine(37) in tRNA + dimethylallyl diphosphate = N(6)-dimethylallyladenosine(37) in tRNA + diphosphate. Catalyzes the transfer of a dimethylallyl group onto the adenine at position 37 in tRNAs that read codons beginning with uridine, leading to the formation of N6-(dimethylallyl)adenosine (i(6)A). The chain is tRNA dimethylallyltransferase from Methylococcus capsulatus (strain ATCC 33009 / NCIMB 11132 / Bath).